A 687-amino-acid polypeptide reads, in one-letter code: Auxin response factor 14 (687 aa).

Positions 133–235 form a DNA-binding region, TF-B3; the sequence is FCKTLTASDT…QLRLGVRRAV (103 aa).

It belongs to the ARF family. Homo and heterodimers. In terms of tissue distribution, expressed in roots, culms, leaves and young panicles.

The protein localises to the nucleus. Auxin response factors (ARFs) are transcriptional factors that bind specifically to the DNA sequence 5'-TGTCTC-3' found in the auxin-responsive promoter elements (AuxREs). This is Auxin response factor 14 (ARF14) from Oryza sativa subsp. japonica (Rice).